The chain runs to 544 residues: MAKDIKFSEEARRSMLRGVDALADAVKVTLGPKGRNVVLEKKFGSPLITNDGVTIAKEIELEDAFENMGAKLVAEVASKTNDVAGDGTTTATVLAQAMIREGLKNVTAGANPVGVRKGIEQAVAVAVESLKEISKPIEGKESIAQVASISAADEEVGSLIAEAMERVGNDGVITIEESKGFTTELEVVEGMQFDRGYASPYMVTDSDKMEAVLENPYILVTDKKITNIQEILPVLEQVVQQGKPLLLIAEDVEGEALATLVVNKLRGTFNAVAVKAPGFGDRRKAMLEDISILTGAEVITEDLGLDLKSTQINQLGRASKVVVTKENTTIVEGAGDTEQIAARVNQIRAQVEETTSEFDKEKLQERLAKLAGGVAVIKVGAATETELKERKLRIEDALNSTRAAVEEGIVSGGGTALVNVYNKVAALEAEGDELTGINIVLRALEEPIRQIAHNAGLEGSVIVERLKNEEIGVGYNAATGEWVNMIDKGIVDPTKVTRSALQNAASVAAMFLTTEAVVADKPEENKGGAGMPDMGGMGGMGGMM.

Residues 29-32 (TLGP), 86-90 (DGTTT), Gly-413, 476-478 (NAA), and Asp-492 each bind ATP.

This sequence belongs to the chaperonin (HSP60) family. Forms a cylinder of 14 subunits composed of two heptameric rings stacked back-to-back. Interacts with the co-chaperonin GroES.

It is found in the cytoplasm. The catalysed reaction is ATP + H2O + a folded polypeptide = ADP + phosphate + an unfolded polypeptide.. Its function is as follows. Together with its co-chaperonin GroES, plays an essential role in assisting protein folding. The GroEL-GroES system forms a nano-cage that allows encapsulation of the non-native substrate proteins and provides a physical environment optimized to promote and accelerate protein folding. In Bacillus licheniformis (strain ATCC 14580 / DSM 13 / JCM 2505 / CCUG 7422 / NBRC 12200 / NCIMB 9375 / NCTC 10341 / NRRL NRS-1264 / Gibson 46), this protein is Chaperonin GroEL.